A 539-amino-acid polypeptide reads, in one-letter code: MAKDIKFSSDARAAMVRGVDTLADTVKVTLGPKGRNVVLEKAFGSPLITNDGVTIAKEIELEDHFENMGAKLVSEVASKTNDIAGDGTTTATVLTQAIVREGLKNVTAGANPIGIRRGIEAAVAAAVEELKVIAQPVANKEAIAQVAAVSSRSEKVGEYISEAMERVGNDGVITIEESRGMETELEVVEGMQFDRGYLSQYMVTDNEKMVADLENPYILVTDKKISNIQDILPLLEEVLKTSRPLLIIADDVAGEALPTLVLNKIRGTFNVVAVKAPGFGDRRKAMLEDIAVLTGATVITEDLGLELKDATMESLGQASKVTVDKDSTVIVEGAGSAEAIANRVNLIKSQLETTTSEFDREKLQERLAKLSGGVAVIKVGAATETALKEMKLRIEDALNATRAAVEEGIVAGGGTALVNVIAKVAELDLEGDDATGRNIVLRALEEPVRQIAYNAGYEGSVIIDKLKNSPVGTGFNAANGEWVDMVESGIIDPVKVTRSALQNAASVASLILTTEAVVADKPEQKAPAAPATDPGMMGY.

ATP-binding positions include 29-32 (TLGP), 86-90 (DGTTT), G413, 476-478 (NAA), and D492.

This sequence belongs to the chaperonin (HSP60) family. Forms a cylinder of 14 subunits composed of two heptameric rings stacked back-to-back. Interacts with the co-chaperonin GroES.

The protein localises to the cytoplasm. The catalysed reaction is ATP + H2O + a folded polypeptide = ADP + phosphate + an unfolded polypeptide.. Its function is as follows. Together with its co-chaperonin GroES, plays an essential role in assisting protein folding. The GroEL-GroES system forms a nano-cage that allows encapsulation of the non-native substrate proteins and provides a physical environment optimized to promote and accelerate protein folding. The sequence is that of Chaperonin GroEL from Streptococcus thermophilus (strain CNRZ 1066).